The chain runs to 117 residues: MVAMKYVIAMIRPERLDAVKRELQKIEVSRLTVSSVSGYGAQKGYMEIYRAMEYDANLLEKIKIEIAVNDEFLEPTIEAIKTGAKGSDGYVGSGKIFVLPLENVIRIRTNETGPEAI.

Residues T32, 40 to 42 (GAQ), and 92 to 95 (GSGK) contribute to the ADP site. Residues T32, 40-42 (GAQ), and 92-95 (GSGK) each bind ATP.

The protein belongs to the P(II) protein family. Homotrimer. Interacts and forms stable complexes with the glutamine synthetase GlnA1.

The protein localises to the cytoplasm. Its activity is regulated as follows. Inhibitory effects on GlnA1 are abolished in the presence of the effector 2-oxoglutarate. Involved in the regulation of nitrogen metabolism. Regulates the activity of its targets by protein-protein interaction in response to the nitrogen status of the cell. Allows finetuning control of the glutamine synthetase GlnA1 under changing nitrogen availabilities via direct protein interaction. The sequence is that of Nitrogen regulatory protein GlnK1 from Methanosarcina mazei (strain ATCC BAA-159 / DSM 3647 / Goe1 / Go1 / JCM 11833 / OCM 88) (Methanosarcina frisia).